Reading from the N-terminus, the 245-residue chain is Probable transcriptional regulatory protein TP_0474 (245 aa).

It belongs to the TACO1 family.

The protein localises to the cytoplasm. The polypeptide is Probable transcriptional regulatory protein TP_0474 (Treponema pallidum (strain Nichols)).